Reading from the N-terminus, the 407-residue chain is MNKSNNTSNRRAERLTTIGDDAPFGNINFFTISFLSPEKVEKTKYLDIRGFKIHNGYNTLEVANSDAKELRKKYIDHDVYVTQLGKVYSWDDPTKTDSIEYEDEKLNELEKTRKEHTDKVKLMQQQFKNEFEIIRPNINTDRLNNQKKRLRDKLYSKGLISKAEYEMAETLDKPTNEIKDIAVCQKQAEEEAVKMANEDYLDENPPVGIKFGCISIYSPKFIRGLKQFCFKLRGLFESQEELEDRVNKLHKIYPNDRIHTFEVGKWIPYSDTIDDNEVSLNYLNYSMKCYLDNVANEREEFEKRKDNLQKQNEEAAKITKRKNRQEKRREKRLALKEAKNTAKTSVSSIPDTSSTTTSTNSTPTNTKSNSVQNINHQGPVELPDNMDPAINESDKEAIQNILDYIEN.

2 coiled-coil regions span residues threonine 96–glutamate 130 and methionine 287–serine 345. The span at glutamate 302–lysine 317 shows a compositional bias: basic and acidic residues. The segment at glutamate 302–aspartate 394 is disordered. Basic residues predominate over residues isoleucine 318–lysine 331. Residues threonine 344–serine 370 show a composition bias toward low complexity.

This is an uncharacterized protein from Acanthamoeba polyphaga (Amoeba).